A 104-amino-acid polypeptide reads, in one-letter code: Cell division topological specificity factor (104 aa).

Belongs to the MinE family.

Functionally, prevents the cell division inhibition by proteins MinC and MinD at internal division sites while permitting inhibition at polar sites. This ensures cell division at the proper site by restricting the formation of a division septum at the midpoint of the long axis of the cell. This is Cell division topological specificity factor from Sorangium cellulosum (strain So ce56) (Polyangium cellulosum (strain So ce56)).